We begin with the raw amino-acid sequence, 335 residues long: Biotin synthase (335 aa).

One can recognise a Radical SAM core domain in the interval 47–276 (FYGKKVKLNM…SKEIRISGGR (230 aa)). The [4Fe-4S] cluster site is built by Cys65, Cys69, and Cys72. Residues Cys109, Cys141, Cys201, and Arg271 each coordinate [2Fe-2S] cluster.

Belongs to the radical SAM superfamily. Biotin synthase family. As to quaternary structure, homodimer. It depends on [4Fe-4S] cluster as a cofactor. Requires [2Fe-2S] cluster as cofactor.

The enzyme catalyses (4R,5S)-dethiobiotin + (sulfur carrier)-SH + 2 reduced [2Fe-2S]-[ferredoxin] + 2 S-adenosyl-L-methionine = (sulfur carrier)-H + biotin + 2 5'-deoxyadenosine + 2 L-methionine + 2 oxidized [2Fe-2S]-[ferredoxin]. The protein operates within cofactor biosynthesis; biotin biosynthesis; biotin from 7,8-diaminononanoate: step 2/2. Catalyzes the conversion of dethiobiotin (DTB) to biotin by the insertion of a sulfur atom into dethiobiotin via a radical-based mechanism. The polypeptide is Biotin synthase (Bacillus subtilis subsp. natto).